Consider the following 239-residue polypeptide: Probable transcriptional regulatory protein Ajs_1898 (239 aa).

Residues Met1 to Arg21 are disordered.

Belongs to the TACO1 family.

It is found in the cytoplasm. The protein is Probable transcriptional regulatory protein Ajs_1898 of Acidovorax sp. (strain JS42).